Consider the following 240-residue polypeptide: Large ribosomal subunit protein uL1c (240 aa).

The protein belongs to the universal ribosomal protein uL1 family. Part of the 50S ribosomal subunit.

The protein localises to the plastid. The protein resides in the chloroplast. Its function is as follows. Binds directly to 23S rRNA. Might be involved in E site tRNA release (Potential). This chain is Large ribosomal subunit protein uL1c (rpl1), found in Cyanidium caldarium (Red alga).